Consider the following 416-residue polypeptide: LL-diaminopimelate aminotransferase (416 aa).

Substrate is bound by residues Tyr25 and Gly52. Pyridoxal 5'-phosphate is bound by residues Tyr78, Ser115 to Lys116, Tyr140, Asn190, Tyr221, and Ser248 to Ser250. Substrate contacts are provided by Lys116, Tyr140, and Asn190. Lys251 carries the N6-(pyridoxal phosphate)lysine modification. Arg259 is a pyridoxal 5'-phosphate binding site.

The protein belongs to the class-I pyridoxal-phosphate-dependent aminotransferase family. As to quaternary structure, homodimer. It depends on pyridoxal 5'-phosphate as a cofactor.

It localises to the cytoplasm. The catalysed reaction is (2S,6S)-2,6-diaminopimelate + 2-oxoglutarate = (S)-2,3,4,5-tetrahydrodipicolinate + L-glutamate + H2O + H(+). It functions in the pathway amino-acid biosynthesis; L-lysine biosynthesis via DAP pathway; LL-2,6-diaminopimelate from (S)-tetrahydrodipicolinate (aminotransferase route): step 1/1. Its function is as follows. Involved in the synthesis of meso-diaminopimelate (m-DAP or DL-DAP), required for both lysine and peptidoglycan biosynthesis. Catalyzes the direct conversion of tetrahydrodipicolinate to LL-diaminopimelate. This chain is LL-diaminopimelate aminotransferase (dapL), found in Methanococcus maripaludis (strain DSM 14266 / JCM 13030 / NBRC 101832 / S2 / LL).